The following is a 260-amino-acid chain: Global transcriptional regulator CodY (260 aa).

Residues 1–159 (MPNLLEKTRK…SSTVVGIQLL (159 aa)) are GAF domain. The segment at residues 207–226 (ASVIADRIGITRSVIVNALR) is a DNA-binding region (H-T-H motif).

The protein belongs to the CodY family.

The protein resides in the cytoplasm. Functionally, DNA-binding global transcriptional regulator which is involved in the adaptive response to starvation and acts by directly or indirectly controlling the expression of numerous genes in response to nutrient availability. During rapid exponential growth, CodY is highly active and represses genes whose products allow adaptation to nutrient depletion. The protein is Global transcriptional regulator CodY of Streptococcus equi subsp. zooepidemicus (strain H70).